The following is a 562-amino-acid chain: ATP synthase subunit beta, mitochondrial (562 aa).

Composition is skewed to low complexity over residues 1-13 (MASRRLLSSLLRS) and 20-40 (SKSPISNINPKLSSSSPSSKS). Disordered regions lie at residues 1–43 (MASR…SRAS) and 58–83 (SAAAAAPPQPPPAKPEGGKGGGKITD). The transit peptide at 1-55 (MASRRLLSSLLRSSSRRSVSKSPISNINPKLSSSSPSSKSRASPYGYLLTRAAEY) directs the protein to the mitochondrion. Position 237-244 (237-244 (GGAGVGKT)) interacts with ATP.

It belongs to the ATPase alpha/beta chains family. In terms of assembly, F-type ATPases have 2 components, CF(1) - the catalytic core - and CF(0) - the membrane proton channel. CF(1) has five subunits: alpha(3), beta(3), gamma(1), delta(1), epsilon(1). CF(0) has three main subunits: a, b and c.

The protein localises to the mitochondrion. It is found in the mitochondrion inner membrane. It catalyses the reaction ATP + H2O + 4 H(+)(in) = ADP + phosphate + 5 H(+)(out). Its function is as follows. Mitochondrial membrane ATP synthase (F(1)F(0) ATP synthase or Complex V) produces ATP from ADP in the presence of a proton gradient across the membrane which is generated by electron transport complexes of the respiratory chain. F-type ATPases consist of two structural domains, F(1) - containing the extramembraneous catalytic core, and F(0) - containing the membrane proton channel, linked together by a central stalk and a peripheral stalk. During catalysis, ATP synthesis in the catalytic domain of F(1) is coupled via a rotary mechanism of the central stalk subunits to proton translocation. Subunits alpha and beta form the catalytic core in F(1). Rotation of the central stalk against the surrounding alpha(3)beta(3) subunits leads to hydrolysis of ATP in three separate catalytic sites on the beta subunits. The sequence is that of ATP synthase subunit beta, mitochondrial (ATPB) from Hevea brasiliensis (Para rubber tree).